A 475-amino-acid chain; its full sequence is Ribonuclease Y (475 aa).

The tract at residues 34 to 73 (EFERESRERRNELQRVERRLMQKEESLDKKSETLEQKDDR) is disordered. The KH domain maps to 165–228 (TVTVVQLPND…EVARIALEKL (64 aa)). One can recognise an HD domain in the interval 291–384 (VLKHAIEVSH…VTAADAISAA (94 aa)).

Belongs to the RNase Y family.

In terms of biological role, endoribonuclease that initiates mRNA decay. The sequence is that of Ribonuclease Y from Alkaliphilus metalliredigens (strain QYMF).